Here is a 304-residue protein sequence, read N- to C-terminus: MTRTHDDEWDLASSVGATATMVAAGRAMATKDPRGLIDDPFAEPLVRAVGVDFFTKMMDGELDLDAIENATPVRIQSMVDGMAVRTKYFDDYFVDATDAGVRRVVILASGLDSRAYRLPWPAGTVVYEIDQPRVIEFKSNTLAEVGAEPTATRRTIPIDLRGDWPAALSAAGFDPAAPTAWLAEGLLIYLPPEAQDRLFDNITALSAPGSTIATEFVPGIVDFDAERVREMSGSFRQHGVDIDMASLVYAGERNHVIDYLNGLGWRAEGVTRTELFHRHGIEVPAPENDDPLGEIIFISATRTR.

Residues D130 and 159 to 160 (DL) contribute to the S-adenosyl-L-methionine site.

This sequence belongs to the UPF0677 family.

Its function is as follows. Exhibits S-adenosyl-L-methionine-dependent methyltransferase activity. The sequence is that of Putative S-adenosyl-L-methionine-dependent methyltransferase MAP_4189c from Mycolicibacterium paratuberculosis (strain ATCC BAA-968 / K-10) (Mycobacterium paratuberculosis).